We begin with the raw amino-acid sequence, 38 residues long: Kappa-actitoxin-Bcs3a (38 aa).

The 36-residue stretch at 2–37 (CIDRFPTGTCKHVKKGGSCKNSQKYRINCAKTCGLC) folds into the ShKT domain. 3 disulfides stabilise this stretch: Cys-2–Cys-37, Cys-11–Cys-30, and Cys-20–Cys-34. The interval 25 to 26 (KY) is crucial for binding to potassium channels.

The protein belongs to the sea anemone type 1 potassium channel toxin family. Type 1b subfamily.

The protein resides in the secreted. It localises to the nematocyst. Inhibits voltage-gated potassium channels (IC(50)=405.0 nM for rKCNA1/Kv1.1, IC(50)=0.03 nM for rKCNA2/Kv1.2, IC(50)=1.31 nM for rKCNA6/Kv1.6, IC(50)=74.11 nM for hKCNA3/Kv1.3, and IC(50)=247.69 nM for insect Shaker IR). Binds the Shaker IR channels in a voltage-independent manner. This chain is Kappa-actitoxin-Bcs3a, found in Bunodosoma caissarum (Sea anemone).